Here is a 424-residue protein sequence, read N- to C-terminus: MPLLWLRGFLLASCWIIVRSSPTPGSEGHGAAPDCPSCALATLPKDGPNSQPEMVEAVKKHILNMLHLKKRPDVTQPVPKAALLNAIRKLHVGKVGENGYVEIEDDIGRRAEMNELMEQTSEIITFAESGTARKTLHFEISKEGSDLSVVERAEVWLFLKVPKANRTRTKVTIRLFQQQKHPQGSLDMGDEAEEMGLKGERSELLLSEKVVDARKSTWHIFPVSSSIQRLLDQGKSSLDVRIACEQCQESGASLVLLGKKKKKEVDGDGKKKDGSDGGLEEEKEQSHRPFLMLQARQSEDHPHRRRRRGLECDGKVNICCKKQFFVSFKDIGWNDWIIAPSGYHANYCEGECPSHIAGTSGSSLSFHSTVINHYRMRGHSPFANLKSCCVPTKLRPMSMLYYDDGQNIIKKDIQNMIVEECGCS.

A signal peptide spans 1-20; it reads MPLLWLRGFLLASCWIIVRS. Positions 21 to 308 are excised as a propeptide; the sequence is SPTPGSEGHG…EDHPHRRRRR (288 aa). An N-linked (GlcNAc...) asparagine glycan is attached at Asn165. The span at 264–275 shows a compositional bias: basic and acidic residues; that stretch reads EVDGDGKKKDGS. Positions 264–306 are disordered; that stretch reads EVDGDGKKKDGSDGGLEEEKEQSHRPFLMLQARQSEDHPHRRR. 4 disulfides stabilise this stretch: Cys312–Cys320, Cys319–Cys389, Cys348–Cys421, and Cys352–Cys423.

This sequence belongs to the TGF-beta family. As to quaternary structure, dimeric, linked by one or more disulfide bonds. Inhibin A is a dimer of alpha/INHA and beta-A/INHBA. Activin A is a homodimer of beta-A/INHBA. Activin AB is a dimer of beta-A/INHBA and beta-B/INHBB. Interacts with FST and FSTL3; these interactions prevent activin A interaction to its type II receptor. Activin A interacts with ACVR2A. Activin A interacts with BMPR2. Inhibin A interacts with ACVR1; this interaction creates a non-signaling complex (NSC) that inhibits ACVR1-mediated BMP signaling. Inhibin A interacts with ACVR2A.

It is found in the secreted. Its function is as follows. Inhibins/activins are involved in regulating a number of diverse functions such as hypothalamic and pituitary hormone secretion, gonadal hormone secretion, germ cell development and maturation, erythroid differentiation, insulin secretion, nerve cell survival, embryonic axial development or bone growth, depending on their subunit composition. Activin A is a homodimer of INHBA that plays a role in several essential biological processes including embryonic development, stem cell maintenance and differentiation, haematopoiesis, cell proliferation and tissue fibrosis. Signals through type I (such as ACVR1B or ACVR1C) and type II receptors (such as ACVR2A, ACVR2B or BMPR2) which, upon ligand binding, phosphorylate SMAD2 and SMAD3 intracellular signaling mediators that form a complex with SMAD4, translocate to the nucleus and modulate gene expression. Can also activate alternative non-canonical intracellular signaling pathways including the p38 MAPK, extracellular signal-regulated kinases 1/2 (ERK1/2) and c-Jun N-terminal kinases (JNKs) to modulate cell migration and differentiation. Alternatively, promotes osteoblastic differentiation via ACVRL1-SMAD1/5/9 pathway. In addition, can engage the type I receptor ACVR1 to form an ACVR1-activin A-type II receptor non-signaling complex (NSC) that renders receptors unavailable for engagement with BMPs, hence resulting in an apparent inhibition of ACVR1-mediated BMP signaling. Functionally, inhibin A is a dimer of alpha/INHA and beta-A/INHBA that functions as a feedback regulator in the hypothalamic-pituitary-gonadal (HPG) axis. Inhibits the secretion of FSH from the anterior pituitary gland by acting on pituitary gonadotrope cells. Antagonizes activin A by binding to the proteoglycan, betaglycan, and forming a stable complex with and, thereby, sequestering type II activin receptors while excluding type I receptor. The chain is Inhibin beta A chain (Inhba) from Rattus norvegicus (Rat).